Consider the following 237-residue polypeptide: Large ribosomal subunit protein uL3 (237 aa).

Disordered stretches follow at residues 133 to 155 and 213 to 237; these read ASHG…DPGK and PENA…EGAE. The span at 135–150 shows a compositional bias: polar residues; that stretch reads HGNSITHRSHGSTGQR. Glutamine 151 is modified (N5-methylglutamine). Over residues 220-237 the composition is skewed to low complexity; sequence AGLRAGAKAEAAATEGAE.

Belongs to the universal ribosomal protein uL3 family. Part of the 50S ribosomal subunit. Forms a cluster with proteins L14 and L19. Methylated by PrmB.

In terms of biological role, one of the primary rRNA binding proteins, it binds directly near the 3'-end of the 23S rRNA, where it nucleates assembly of the 50S subunit. The polypeptide is Large ribosomal subunit protein uL3 (Brucella suis biovar 1 (strain 1330)).